Here is a 266-residue protein sequence, read N- to C-terminus: Zinc finger protein CG30 (266 aa).

The RING-type zinc-finger motif lies at 8-63; the sequence is CNICFSVAEIKNYFMQPIDRLTMIPVLELDTCKHQLCSMCIRKIRKRKKTPCPLCR.

It localises to the host nucleus. Its function is as follows. Plays a role in the proper expression of late and very late genes. This Bombyx mori nuclear polyhedrosis virus (BmNPV) protein is Zinc finger protein CG30 (CG30).